Consider the following 651-residue polypeptide: Mitochondrial sodium/calcium exchanger protein (651 aa).

A helical membrane pass occupies residues 51 to 71 (VILIILGILYLIILFVIMSSI). Over 72-91 (ADDFFCPAISGIVSHLRMSE) the chain is Cytoplasmic. A helical transmembrane segment spans residues 92–112 (SIAGVTFLAFGNGAPDVFSSI). Residues 113-126 (SSVLTTPKPKADLA) lie on the Extracellular side of the membrane. The chain crosses the membrane as a helical span at residues 127-147 (LGDLFGTSIFVTTVVLAIIIF). The Cytoplasmic portion of the chain corresponds to 148-161 (TKSFKVAIIPTLRD). The helical transmembrane segment at 162-182 (LIFYMTTLAFIVFCFLKFDKI) threads the bilayer. Position 183 (Glu-183) is a topological domain, extracellular. A helical transmembrane segment spans residues 184 to 204 (VWMPATFLGIYGVYVVTVIIL). At 205 to 398 (GIYRTHRKKR…PSRDEFSEMN (194 aa)) the chain is on the cytoplasmic side. A helical transmembrane segment spans residues 399–419 (IFIKIVTVIKVVPVFFFKLTV). Topologically, residues 420–428 (PSNEMSWCK) are extracellular. The helical transmembrane segment at 429–449 (PLFILHCFASIQFALFSIQII) threads the bilayer. Residues 450 to 458 (TLKPFDGSP) lie on the Cytoplasmic side of the membrane. A helical membrane pass occupies residues 459–479 (GLWLYGLGFSAILAMVAMYFL). Over 480 to 486 (PLSKEQK) the chain is Extracellular. A helical membrane pass occupies residues 487–507 (YYKEIYSYLGFLMSIAWIYAT). Over 508–510 (SNE) the chain is Cytoplasmic. The helical transmembrane segment at 511 to 531 (IVSVVTMIGVVTGLSMELLGL) threads the bilayer. Over 532–559 (TIMAWSNCIGDIVADIAVVKQGYPKMAM) the chain is Extracellular. The chain crosses the membrane as a helical span at residues 560 to 580 (AAAIGGPLFNLLIGFGLPFTI). Residues 581–595 (AAAQGKEMELLINPV) lie on the Cytoplasmic side of the membrane. The chain crosses the membrane as a helical span at residues 596–616 (YRLLMLFLGISLVTTFVALFI). The Extracellular portion of the chain corresponds to 617–626 (QRFTVRRPHA). A helical transmembrane segment spans residues 627-647 (VLLIFIFVVFLIFICLAEFHV). Over 648 to 651 (LEWN) the chain is Cytoplasmic.

It belongs to the Ca(2+):cation antiporter (CaCA) (TC 2.A.19) family. SLC24A subfamily. As to expression, expressed in the seam cells of the organism. Expression is visible in the seam cells across all larval stages, and expression persists into the adult stage of the organism.

It is found in the mitochondrion inner membrane. With respect to regulation, inhibited by the sodium/calcium exchanger inhibitor CGP-37157. Mitochondrial sodium/calcium antiporter that mediates sodium-dependent calcium efflux from mitochondrion, thereby acting as a key regulator of mitochondrion calcium homeostasis. Required for patterning of neural circuits: functions in the same pathway as RAC-dependent effectors of the unc-6/netrin signaling pathway to set left/ right patterning of the VD/DD GABAergic circuit. The polypeptide is Mitochondrial sodium/calcium exchanger protein (Caenorhabditis elegans).